A 239-amino-acid chain; its full sequence is Phosphoribosylaminoimidazole-succinocarboxamide synthase (239 aa).

It belongs to the SAICAR synthetase family.

The catalysed reaction is 5-amino-1-(5-phospho-D-ribosyl)imidazole-4-carboxylate + L-aspartate + ATP = (2S)-2-[5-amino-1-(5-phospho-beta-D-ribosyl)imidazole-4-carboxamido]succinate + ADP + phosphate + 2 H(+). Its pathway is purine metabolism; IMP biosynthesis via de novo pathway; 5-amino-1-(5-phospho-D-ribosyl)imidazole-4-carboxamide from 5-amino-1-(5-phospho-D-ribosyl)imidazole-4-carboxylate: step 1/2. The polypeptide is Phosphoribosylaminoimidazole-succinocarboxamide synthase (Nitratiruptor sp. (strain SB155-2)).